A 264-amino-acid chain; its full sequence is Thymidylate synthase (264 aa).

A dUMP-binding site is contributed by arginine 21. Histidine 51 serves as a coordination point for (6R)-5,10-methylene-5,6,7,8-tetrahydrofolate. Residue 126–127 coordinates dUMP; that stretch reads RR. The active-site Nucleophile is cysteine 146. DUMP-binding positions include 166–169, asparagine 177, and 207–209; these read RSCD and HLY. Aspartate 169 contributes to the (6R)-5,10-methylene-5,6,7,8-tetrahydrofolate binding site. Alanine 263 is a binding site for (6R)-5,10-methylene-5,6,7,8-tetrahydrofolate.

This sequence belongs to the thymidylate synthase family. Bacterial-type ThyA subfamily. Homodimer.

Its subcellular location is the cytoplasm. It carries out the reaction dUMP + (6R)-5,10-methylene-5,6,7,8-tetrahydrofolate = 7,8-dihydrofolate + dTMP. It participates in pyrimidine metabolism; dTTP biosynthesis. Functionally, catalyzes the reductive methylation of 2'-deoxyuridine-5'-monophosphate (dUMP) to 2'-deoxythymidine-5'-monophosphate (dTMP) while utilizing 5,10-methylenetetrahydrofolate (mTHF) as the methyl donor and reductant in the reaction, yielding dihydrofolate (DHF) as a by-product. This enzymatic reaction provides an intracellular de novo source of dTMP, an essential precursor for DNA biosynthesis. The sequence is that of Thymidylate synthase from Serratia proteamaculans (strain 568).